A 199-amino-acid polypeptide reads, in one-letter code: MGGTFDPIHNGHLVAGSEVADLFDLDVVIYVPTGQPWQKKHKKVSAAEDRYLMTVVATASNPRFLVSRVDIDRGGDTYTVDTLADIRAEYPEAELFFITGADALQKIVTWRDWEKIFDLAHFVGVTRPGYELPKDDEGSDDPLSKEVAAGRLSLVEIPAMAISSTDVRERATSGRPVWYLVPDGVVQYIAKHGMYVSSE.

It belongs to the NadD family.

It carries out the reaction nicotinate beta-D-ribonucleotide + ATP + H(+) = deamido-NAD(+) + diphosphate. It participates in cofactor biosynthesis; NAD(+) biosynthesis; deamido-NAD(+) from nicotinate D-ribonucleotide: step 1/1. In terms of biological role, catalyzes the reversible adenylation of nicotinate mononucleotide (NaMN) to nicotinic acid adenine dinucleotide (NaAD). The sequence is that of Probable nicotinate-nucleotide adenylyltransferase from Corynebacterium jeikeium (strain K411).